The following is a 105-amino-acid chain: Small ribosomal subunit protein eS24 (105 aa).

This sequence belongs to the eukaryotic ribosomal protein eS24 family.

The protein is Small ribosomal subunit protein eS24 of Ignicoccus hospitalis (strain KIN4/I / DSM 18386 / JCM 14125).